Here is a 1733-residue protein sequence, read N- to C-terminus: DNA-directed RNA polymerase II subunit RPB1 (1733 aa).

Positions 67, 70, 77, 80, 107, 110, 148, and 167 each coordinate Zn(2+). Positions 248 to 260 (PSISFNESQRGED) are lid loop. The segment at 306–323 (NDIAGQPQALQKSGRPVK) is rudder loop. Residues aspartate 481, aspartate 483, and aspartate 485 each coordinate Mg(2+). Residue lysine 695 forms a Glycyl lysine isopeptide (Lys-Gly) (interchain with G-Cter in ubiquitin) linkage. Residues 810–822 (PQEFFFHAMGGRE) form a bridging helix region. Residues lysine 1246 and lysine 1350 each participate in a glycyl lysine isopeptide (Lys-Gly) (interchain with G-Cter in ubiquitin) cross-link. The residue at position 1471 (threonine 1471) is a Phosphothreonine. Positions 1537 to 1733 (VSSPGFSPTS…QKHNENENSR (197 aa)) are disordered. Low complexity predominate over residues 1538–1719 (SSPGFSPTSP…YSPGSPAYSP (182 aa)). Repeat copies occupy residues 1549 to 1555 (YSPTSPA), 1556 to 1562 (YSPTSPS), 1563 to 1569 (YSPTSPS), 1570 to 1576 (YSPTSPS), 1577 to 1583 (YSPTSPS), 1584 to 1590 (YSPTSPS), 1591 to 1597 (YSPTSPS), 1598 to 1604 (YSPTSPS), 1605 to 1611 (YSPTSPS), 1612 to 1618 (YSPTSPS), 1619 to 1625 (YSPTSPS), 1626 to 1632 (YSPTSPS), 1633 to 1639 (YSPTSPS), 1640 to 1646 (YSPTSPS), 1647 to 1653 (YSPTSPS), 1654 to 1660 (YSPTSPA), 1661 to 1667 (YSPTSPS), 1668 to 1674 (YSPTSPS), 1675 to 1681 (YSPTSPS), 1682 to 1688 (YSPTSPS), 1689 to 1695 (YSPTSPN), 1696 to 1702 (YSPTSPS), and 1703 to 1709 (YSPTSPG). Positions 1549-1716 (YSPTSPAYSP…SPGYSPGSPA (168 aa)) are C-terminal domain (CTD); 24 X 7 AA approximate tandem repeats of Y-S-P-T-S-P-[A-S-N-G]. One copy of the 24; approximate repeat lies at 1710–1716 (YSPGSPA). Basic and acidic residues predominate over residues 1720–1733 (KQDEQKHNENENSR).

This sequence belongs to the RNA polymerase beta' chain family. As to quaternary structure, component of the RNA polymerase II (Pol II) complex consisting of 12 subunits. Interacts with DEF1; the interaction is direct and serves to bridge RPB1 to the Elongin complex in a DNA-damaged dependent manner. Interacts with the Elongin subunit ELA1. Interacts with the Elongin subunit ELC1. Interacts with ASK10. Interacts with ESS1. Interacts with RTT103. Interacts with SHE2. In terms of processing, the tandem 7 residues repeats in the C-terminal domain (CTD) can be highly phosphorylated. The phosphorylation activates Pol II. Phosphorylation occurs mainly at residues 'Ser-2' and 'Ser-5' of the heptapeptide repeat. The phosphorylated form of Pol II appears to carry, on average, one phosphate per repeat. The phosphorylation state is believed to result from the balanced action of site-specific CTD kinases and phosphatases, and a 'CTD code' that specifies the position of Pol II within the transcription cycle has been proposed. Phosphorylation at 'Ser-5' occurs in promoter-proximal regions in early elongation. Phosphorylation at 'Ser-2' predominates in regions more distal to the promoter and triggers binding of the 3' RNA processing machinery. CTD kinases include KIN28 (as part of the TFKII complex, a subcomplex of the TFIIH holo complex), SSN3/SRB10 (as part of the SRB8-11 complex, a module of the Mediator complex), CTK1 (as part of CTD kinase), and probably BUR1 (as part of the BUR1-BUR2 kinase complex). Phosphatases include FCP1 and SSU72. Following transcription stress, the elongating form of RNA polymerase II (RNA pol IIo) is polyubiquitinated via 'Lys-63'-linkages on Lys-1246 by the RSP5-UBA1-UBC5 complex at DNA damage sites without leading to degradation: ubiquitination promotes RNA pol IIo backtracking to allow access by the transcription-coupled nucleotide excision repair (TC-NER) machinery. Subsequent DEF1-dependent polyubiquitination by the elongin complex via 'Lys-48'-linkages may lead to proteasome-mediated degradation; presumably at stalled RNA pol II where TC-NER has failed, to halt global transcription and enable 'last resort' DNA repair pathways.

The protein resides in the nucleus. It carries out the reaction RNA(n) + a ribonucleoside 5'-triphosphate = RNA(n+1) + diphosphate. DNA-dependent RNA polymerase catalyzes the transcription of DNA into RNA using the four ribonucleoside triphosphates as substrates. Largest and catalytic component of RNA polymerase II which synthesizes mRNA precursors and many functional non-coding RNAs. Forms the polymerase active center together with the second largest subunit. Pol II is the central component of the basal RNA polymerase II transcription machinery. During a transcription cycle, Pol II, general transcription factors and the Mediator complex assemble as the preinitiation complex (PIC) at the promoter. 11-15 base pairs of DNA surrounding the transcription start site are melted and the single-stranded DNA template strand of the promoter is positioned deeply within the central active site cleft of Pol II to form the open complex. After synthesis of about 30 bases of RNA, Pol II releases its contacts with the core promoter and the rest of the transcription machinery (promoter clearance) and enters the stage of transcription elongation in which it moves on the template as the transcript elongates. Pol II appears to oscillate between inactive and active conformations at each step of nucleotide addition. Elongation is influenced by the phosphorylation status of the C-terminal domain (CTD) of Pol II largest subunit (RPB1), which serves as a platform for assembly of factors that regulate transcription initiation, elongation, termination and mRNA processing. Pol II is composed of mobile elements that move relative to each other. The core element with the central large cleft comprises RPB3, RBP10, RPB11, RPB12 and regions of RPB1 and RPB2 forming the active center. The clamp element (portions of RPB1, RPB2 and RPB3) is connected to the core through a set of flexible switches and moves to open and close the cleft. A bridging helix emanates from RPB1 and crosses the cleft near the catalytic site and is thought to promote translocation of Pol II by acting as a ratchet that moves the RNA-DNA hybrid through the active site by switching from straight to bent conformations at each step of nucleotide addition. In elongating Pol II, the lid loop (RPB1) appears to act as a wedge to drive apart the DNA and RNA strands at the upstream end of the transcription bubble and guide the RNA strand toward the RNA exit groove located near the base of the largely unstructured CTD domain of RPB1. The rudder loop (RPB1) interacts with single-stranded DNA after separation from the RNA strand, likely preventing reassociation with the exiting RNA. The cleft is surrounded by jaws: an upper jaw formed by portions of RBP1, RPB2 and RPB9, and a lower jaw, formed by RPB5 and portions of RBP1. The jaws are thought to grab the incoming DNA template, mainly by RPB5 direct contacts to DNA. This chain is DNA-directed RNA polymerase II subunit RPB1 (RPO21), found in Saccharomyces cerevisiae (strain ATCC 204508 / S288c) (Baker's yeast).